A 449-amino-acid polypeptide reads, in one-letter code: Probable glycosyltransferase 5 (449 aa).

Residues 1–14 (MMEKHGGKVTSDRR) show a composition bias toward basic and acidic residues. The disordered stretch occupies residues 1–24 (MMEKHGGKVTSDRRAGRRQHGQRC). Residues 1–28 (MMEKHGGKVTSDRRAGRRQHGQRCSASD) lie on the Cytoplasmic side of the membrane. Residues 29–49 (AAPLVVVVILIVGALFLILGP) traverse the membrane as a helical; Signal-anchor for type II membrane protein segment. The Lumenal portion of the chain corresponds to 50–449 (TGSSSFTVPR…HPTFRAARPT (400 aa)). Positions 74–109 (APPPPPPPAQMQAGANASSEEDSGLPPPRQLTDPPY) are disordered. Asn-89, Asn-413, and Asn-422 each carry an N-linked (GlcNAc...) asparagine glycan.

The protein belongs to the glycosyltransferase 34 family.

Its subcellular location is the golgi apparatus membrane. Functionally, probable glycosyltransferase that may be involved in the biosynthesis of xyloglucan. This is Probable glycosyltransferase 5 from Oryza sativa subsp. indica (Rice).